Reading from the N-terminus, the 236-residue chain is Phosphoribosylaminoimidazole-succinocarboxamide synthase (236 aa).

Belongs to the SAICAR synthetase family.

It carries out the reaction 5-amino-1-(5-phospho-D-ribosyl)imidazole-4-carboxylate + L-aspartate + ATP = (2S)-2-[5-amino-1-(5-phospho-beta-D-ribosyl)imidazole-4-carboxamido]succinate + ADP + phosphate + 2 H(+). It participates in purine metabolism; IMP biosynthesis via de novo pathway; 5-amino-1-(5-phospho-D-ribosyl)imidazole-4-carboxamide from 5-amino-1-(5-phospho-D-ribosyl)imidazole-4-carboxylate: step 1/2. This is Phosphoribosylaminoimidazole-succinocarboxamide synthase from Rickettsia typhi (strain ATCC VR-144 / Wilmington).